The following is an 83-amino-acid chain: Exodeoxyribonuclease 7 small subunit (83 aa).

The protein belongs to the XseB family. In terms of assembly, heterooligomer composed of large and small subunits.

It is found in the cytoplasm. The enzyme catalyses Exonucleolytic cleavage in either 5'- to 3'- or 3'- to 5'-direction to yield nucleoside 5'-phosphates.. In terms of biological role, bidirectionally degrades single-stranded DNA into large acid-insoluble oligonucleotides, which are then degraded further into small acid-soluble oligonucleotides. This Allorhizobium ampelinum (strain ATCC BAA-846 / DSM 112012 / S4) (Agrobacterium vitis (strain S4)) protein is Exodeoxyribonuclease 7 small subunit.